A 116-amino-acid polypeptide reads, in one-letter code: Large ribosomal subunit protein uL14m (116 aa).

Belongs to the universal ribosomal protein uL14 family.

It is found in the mitochondrion. The protein is Large ribosomal subunit protein uL14m (RPL14) of Acanthamoeba polyphaga (Amoeba).